Reading from the N-terminus, the 346-residue chain is Probable dual-specificity RNA methyltransferase RlmN (346 aa).

Glu91 functions as the Proton acceptor in the catalytic mechanism. The 229-residue stretch at 97-325 folds into the Radical SAM core domain; the sequence is TEKRLTVCVS…VSVRYSKGLE (229 aa). Cys104 and Cys330 form a disulfide bridge. 3 residues coordinate [4Fe-4S] cluster: Cys111, Cys115, and Cys118. Residues 158-159, Ser188, 211-213, and Asn287 each bind S-adenosyl-L-methionine; these read GE and SLH. Residue Cys330 is the S-methylcysteine intermediate of the active site.

It belongs to the radical SAM superfamily. RlmN family. It depends on [4Fe-4S] cluster as a cofactor.

It is found in the cytoplasm. It catalyses the reaction adenosine(2503) in 23S rRNA + 2 reduced [2Fe-2S]-[ferredoxin] + 2 S-adenosyl-L-methionine = 2-methyladenosine(2503) in 23S rRNA + 5'-deoxyadenosine + L-methionine + 2 oxidized [2Fe-2S]-[ferredoxin] + S-adenosyl-L-homocysteine. It carries out the reaction adenosine(37) in tRNA + 2 reduced [2Fe-2S]-[ferredoxin] + 2 S-adenosyl-L-methionine = 2-methyladenosine(37) in tRNA + 5'-deoxyadenosine + L-methionine + 2 oxidized [2Fe-2S]-[ferredoxin] + S-adenosyl-L-homocysteine. Functionally, specifically methylates position 2 of adenine 2503 in 23S rRNA and position 2 of adenine 37 in tRNAs. This is Probable dual-specificity RNA methyltransferase RlmN from Picosynechococcus sp. (strain ATCC 27264 / PCC 7002 / PR-6) (Agmenellum quadruplicatum).